A 213-amino-acid polypeptide reads, in one-letter code: V-type ATP synthase subunit D (213 aa).

This sequence belongs to the V-ATPase D subunit family.

Produces ATP from ADP in the presence of a proton gradient across the membrane. This is V-type ATP synthase subunit D from Clostridium botulinum (strain Alaska E43 / Type E3).